A 267-amino-acid polypeptide reads, in one-letter code: L-aspartate dehydrogenase (267 aa).

Positions 124 and 190 each coordinate NAD(+). H218 is a catalytic residue.

The protein belongs to the L-aspartate dehydrogenase family.

It carries out the reaction L-aspartate + NADP(+) + H2O = oxaloacetate + NH4(+) + NADPH + H(+). The catalysed reaction is L-aspartate + NAD(+) + H2O = oxaloacetate + NH4(+) + NADH + H(+). Its pathway is cofactor biosynthesis; NAD(+) biosynthesis; iminoaspartate from L-aspartate (dehydrogenase route): step 1/1. Functionally, specifically catalyzes the NAD or NADP-dependent dehydrogenation of L-aspartate to iminoaspartate. The sequence is that of L-aspartate dehydrogenase from Methanococcus maripaludis (strain C7 / ATCC BAA-1331).